We begin with the raw amino-acid sequence, 226 residues long: UPF0111 protein PH0637 (226 aa).

This sequence belongs to the UPF0111 family.

The chain is UPF0111 protein PH0637 from Pyrococcus horikoshii (strain ATCC 700860 / DSM 12428 / JCM 9974 / NBRC 100139 / OT-3).